Reading from the N-terminus, the 399-residue chain is Elongation factor Tu (399 aa).

The 195-residue stretch at 10 to 204 folds into the tr-type G domain; it reads KPHVNIGTIG…AVDEAIPEPE (195 aa). The interval 19–26 is G1; the sequence is GHVDHGKT. Residue 19-26 coordinates GTP; sequence GHVDHGKT. A Mg(2+)-binding site is contributed by Thr26. The G2 stretch occupies residues 60 to 64; that stretch reads GITIN. Residues 81-84 form a G3 region; it reads DCPG. GTP is bound by residues 81-85 and 136-139; these read DCPGH and NKCD. Residues 136 to 139 are G4; that stretch reads NKCD. A G5 region spans residues 174–176; sequence SGL.

Belongs to the TRAFAC class translation factor GTPase superfamily. Classic translation factor GTPase family. EF-Tu/EF-1A subfamily. Monomer.

The protein localises to the cytoplasm. The enzyme catalyses GTP + H2O = GDP + phosphate + H(+). Its function is as follows. GTP hydrolase that promotes the GTP-dependent binding of aminoacyl-tRNA to the A-site of ribosomes during protein biosynthesis. The polypeptide is Elongation factor Tu (Parasynechococcus marenigrum (strain WH8102)).